A 59-amino-acid chain; its full sequence is Large ribosomal subunit protein bL32 (59 aa).

The protein belongs to the bacterial ribosomal protein bL32 family.

This chain is Large ribosomal subunit protein bL32, found in Lactiplantibacillus plantarum (strain ATCC BAA-793 / NCIMB 8826 / WCFS1) (Lactobacillus plantarum).